We begin with the raw amino-acid sequence, 320 residues long: Aminoacyl tRNA synthase complex-interacting multifunctional protein 2 (320 aa).

A disordered region spans residues 31–51 (HSKTTSPATDAGHVQEPSEPS). Ser36 is modified (phosphoserine). The segment at 82–162 (TPDADLDVTN…HTHSSVKNVP (81 aa)) is interaction with PRKN. The segment at 162 to 225 (PENLLKCFGE…FLFSLFGQKH (64 aa)) is interaction with TP53. Residues 220–317 (LFGQKHNAVH…NLAPFSTALQ (98 aa)) form the GST C-terminal domain.

In terms of assembly, part of the multisynthetase complex (MSC), a multisubunit complex that groups tRNA ligases for Arg (RARS1), Asp (DARS1), Gln (QARS1), Ile (IARS1), Leu (LARS1), Lys (KARS1), Met (MARS1) the bifunctional ligase for Glu and Pro (EPRS1) and the auxiliary subunits AIMP1/p43, AIMP2/p38 and EEF1E1/p18. Interacts (via N-terminus) with KARS1. Interacts with EPRS1. Forms a linear complex that contains MARS1, EEF1E1, EPRS1 and AIMP2 that is at the core of the multisubunit complex. Binds FUBP1 (via C-terminus). Interacts in both its unphosphorylated and phosphorylated forms with p53/TP53 (via N-terminus) in the nucleus following UV irradiation. Interacts (via N-terminus) with PRKN/parkin (via first RING-type domain). Interacts with TARS3. In terms of processing, phosphorylated on serine residues in response to UV irradiation. Ubiquitinated by PRKN, leading to its degradation by the proteasome.

It is found in the cytoplasm. The protein localises to the cytosol. Its subcellular location is the nucleus. Required for assembly and stability of the aminoacyl-tRNA synthase complex. Mediates ubiquitination and degradation of FUBP1, a transcriptional activator of MYC, leading to MYC down-regulation which is required for aveolar type II cell differentiation. Blocks MDM2-mediated ubiquitination and degradation of p53/TP53. Functions as a proapoptotic factor. The protein is Aminoacyl tRNA synthase complex-interacting multifunctional protein 2 (Aimp2) of Rattus norvegicus (Rat).